Here is a 254-residue protein sequence, read N- to C-terminus: MSDRYLEQRISIKFCVKLNKSASETHHLLKEAYGDEVMSRARVFDWHKRFKEGREDVRDDARSGRPVTHRTDDNIQKVKDLVCSNRQLTVRMMAEELNLDKETVRLILKENLNMRKISAKVISGVLKETEPHYVAQAGLELLVSRDPPTLASQSSGIISMSHHAKPKPGVQWCKFQSESTGRRARSADVQGQEKMDVTAQEARTNLPFYLFVLFRSSMNWMMSMHIREGCLFITRSTNSNANLFRKHPHRHTQK.

In Homo sapiens (Human), this protein is Protein GVQW3.